The sequence spans 214 residues: Redox-sensing transcriptional repressor Rex (214 aa).

The H-T-H motif DNA-binding region spans 17–56; that stretch reads LYYRIFKRFHADQVEKASSKQIADAMGIDSATVRRDFSYF. 91–96 contributes to the NAD(+) binding site; sequence GCGNIG.

The protein belongs to the transcriptional regulatory Rex family. Homodimer.

It localises to the cytoplasm. Functionally, modulates transcription in response to changes in cellular NADH/NAD(+) redox state. This chain is Redox-sensing transcriptional repressor Rex, found in Streptococcus pyogenes serotype M1.